The primary structure comprises 878 residues: Leucine--tRNA ligase (878 aa).

Positions 1-14 (MTASKSSSATASAS) are enriched in low complexity. A disordered region spans residues 1–23 (MTASKSSSATASASDRPDRYDPI). The short motif at 58 to 68 (PYPSGSLHMGH) is the 'HIGH' region element. The 'KMSKS' region motif lies at 632–636 (KMSKS). Lysine 635 lines the ATP pocket.

This sequence belongs to the class-I aminoacyl-tRNA synthetase family.

The protein localises to the cytoplasm. The enzyme catalyses tRNA(Leu) + L-leucine + ATP = L-leucyl-tRNA(Leu) + AMP + diphosphate. The protein is Leucine--tRNA ligase of Synechococcus sp. (strain WH7803).